A 694-amino-acid chain; its full sequence is Heat shock protein homolog SSE1 (694 aa).

The segment at alanine 671 to aspartate 694 is disordered. Basic and acidic residues predominate over residues alanine 675–threonine 684.

The protein belongs to the heat shock protein 70 family.

The protein resides in the cytoplasm. This is Heat shock protein homolog SSE1 (SSE1) from Candida glabrata (strain ATCC 2001 / BCRC 20586 / JCM 3761 / NBRC 0622 / NRRL Y-65 / CBS 138) (Yeast).